The sequence spans 601 residues: Serine/threonine-protein phosphatase 2A 65 kDa regulatory subunit A beta isoform (601 aa).

Ala2 carries the post-translational modification N-acetylalanine. HEAT repeat units follow at residues 20–58 (DSLY…GVER), 59–96 (TRSE…GGPD), 97–135 (FAHC…TPVA), 136–173 (LEAY…ASNA), 174–212 (VKAE…ELDS), 213–251 (VKSE…SQDD), 252–290 (LETL…GPKI), 291–333 (TLND…RETI), 334–372 (IMNQ…GKEN), 373–411 (TIEH…GIRQ), 412–450 (LSQS…GVEF), 451–489 (FDEK…GTEW), 490–528 (AQNT…GQEI), 529–567 (TTKQ…DTNA), and 568–601 (LQGE…LALA).

Belongs to the phosphatase 2A regulatory subunit A family. As to quaternary structure, PP2A consists of a common heterodimeric core enzyme, composed of a 36 kDa catalytic subunit (subunit C) and a 65 kDa constant regulatory subunit (PR65 or subunit A), that associates with a variety of regulatory subunits. Proteins that associate with the core dimer include three families of regulatory subunits B (the R2/B/PR55/B55, R3/B''/PR72/PR130/PR59 and R5/B'/B56 families), the 48 kDa variable regulatory subunit, viral proteins, and cell signaling molecules. Interacts with IPO9. Interacts with SGO1. Interacts with RAF1.

In terms of biological role, the PR65 subunit of protein phosphatase 2A serves as a scaffolding molecule to coordinate the assembly of the catalytic subunit and a variable regulatory B subunit. The sequence is that of Serine/threonine-protein phosphatase 2A 65 kDa regulatory subunit A beta isoform (PPP2R1B) from Homo sapiens (Human).